The primary structure comprises 67 residues: MNVTVMFLVLLLLTMPLTDGFNIRATNGGELFGPVQRDAGNVLDHGFQRRRECPPWCPTSHCNAGTC.

The signal sequence occupies residues M1 to G20. The propeptide occupies F21–Q48.

This sequence belongs to the conotoxin L superfamily. Contains 2 disulfide bonds. As to expression, expressed by the venom duct.

The protein localises to the secreted. In Californiconus californicus (California cone), this protein is Conotoxin Cl14c.